The chain runs to 290 residues: Phosphoribosylaminoimidazole-succinocarboxamide synthase (290 aa).

This sequence belongs to the SAICAR synthetase family.

It catalyses the reaction 5-amino-1-(5-phospho-D-ribosyl)imidazole-4-carboxylate + L-aspartate + ATP = (2S)-2-[5-amino-1-(5-phospho-beta-D-ribosyl)imidazole-4-carboxamido]succinate + ADP + phosphate + 2 H(+). It participates in purine metabolism; IMP biosynthesis via de novo pathway; 5-amino-1-(5-phospho-D-ribosyl)imidazole-4-carboxamide from 5-amino-1-(5-phospho-D-ribosyl)imidazole-4-carboxylate: step 1/2. The sequence is that of Phosphoribosylaminoimidazole-succinocarboxamide synthase from Haemophilus influenzae (strain PittEE).